Consider the following 748-residue polypeptide: Cysteine--tRNA ligase, cytoplasmic (748 aa).

Residues 1–25 (MAGSSGQQGKGRRVQPQWSPPAGTQ) form a disordered region. Alanine 2 is modified (N-acetylalanine). Serine 19 is subject to Phosphoserine. Cysteine 55 contributes to the Zn(2+) binding site. Position 56 (glycine 56) interacts with L-cysteine. A 'HIGH' region motif is present at residues 57-67 (PTVYDASHMGH). Position 96 (threonine 96) interacts with L-cysteine. The short motif at 101 to 104 (KIIK) is the 'KIIK' region element. Residues serine 305 and serine 307 each carry the phosphoserine modification. Zn(2+) is bound by residues cysteine 348, histidine 373, and glutamate 377. Position 373 (histidine 373) interacts with L-cysteine. The short motif at 406-410 (KMSKS) is the 'KMSKS' region element. An ATP-binding site is contributed by lysine 409. 2 stretches are compositionally biased toward basic and acidic residues: residues 654–679 (KRQV…EAAK) and 700–717 (KFDE…KELS). Disordered regions lie at residues 654 to 686 (KRQV…MKIP) and 700 to 721 (KFDE…KGQA). Serine 746 is subject to Phosphoserine.

In terms of assembly, homodimer. Zn(2+) is required as a cofactor.

The protein resides in the cytoplasm. It carries out the reaction tRNA(Cys) + L-cysteine + ATP = L-cysteinyl-tRNA(Cys) + AMP + diphosphate. Functionally, catalyzes the ATP-dependent ligation of cysteine to tRNA(Cys). The sequence is that of Cysteine--tRNA ligase, cytoplasmic (CARS1) from Macaca fascicularis (Crab-eating macaque).